Reading from the N-terminus, the 45-residue chain is Temporin-SHf (45 aa).

The N-terminal stretch at 1–10 is a signal peptide; sequence FLGTINLSLC. The propeptide occupies 11 to 35; sequence EEERDADEEERRDEPDESNVEVKKR. At phenylalanine 43 the chain carries Phenylalanine amide.

This sequence belongs to the frog skin active peptide (FSAP) family. Temporin subfamily.

It localises to the secreted. The protein resides in the target cell membrane. Functionally, non-amphipathic alpha-helical antimicrobial peptide with potent activity against some Gram-positive bacteria (including methicillin-resistant Staphylococcus aureus (MRSA)), weak activity against Gram-negative bacteria and no activity against fungi. Permeabilizates membranes through a detergent-like effect probably via the carpet mechanism. More precisely, it strongly and selectively perturbs anionic bilayers membranes by interacting with the polar headgroups and the glycerol backbone region of the phospholipids, hence disrupting the acyl chain packing of the bilayer. Is not active against Leishmania (promastigote and axenic amastigote forms). Does not show hemolytic activity. Does not show toxicity for human THP-1-derived macrophages. This chain is Temporin-SHf, found in Pelophylax saharicus (Sahara frog).